A 205-amino-acid chain; its full sequence is Thymidylate kinase (205 aa).

Position 10–17 (10–17 (GLEGAGKS)) interacts with ATP.

Belongs to the thymidylate kinase family.

It catalyses the reaction dTMP + ATP = dTDP + ADP. Phosphorylation of dTMP to form dTDP in both de novo and salvage pathways of dTTP synthesis. In Idiomarina loihiensis (strain ATCC BAA-735 / DSM 15497 / L2-TR), this protein is Thymidylate kinase.